A 484-amino-acid chain; its full sequence is Gasdermin-D (484 aa).

Residue Y37 is modified to Phosphotyrosine. An S-(2-succinyl)cysteine modification is found at C56. Beta stranded transmembrane passes span 91–97 (QGSVELA) and 103–108 (KIAGGA). At Y158 the chain carries Phosphotyrosine. Beta stranded transmembrane passes span 180-186 (GSGRFSL) and 191-197 (CLQGEGQ). A Phosphoserine modification is found at S185. S-(2-succinyl)cysteine occurs at positions 191 and 268. C191 is lipidated: S-palmitoyl cysteine. The interval 277-296 (VPAEGAFTEDFQGLRAEVET) is linker helix loop. Position 309 is an S-(2-succinyl)cysteine (C309). A glycan (O-linked (GlcNAc) serine) is linked at S338. The residue at position 467 (C467) is an S-(2-succinyl)cysteine.

This sequence belongs to the gasdermin family. In terms of assembly, homooligomer; homooligomeric ring-shaped pore complex containing 27-28 subunits when inserted in the membrane. Homooligomerization is promoted by the mTORC1 complex in macrophages. In response to a canonical inflammasome stimulus, such as nigericin, recruited to NLRP3 inflammasone with similar kinetics to that of uncleaved CASP1 precursor. Although this recruitment is also observed in the absence of PYCARD, it is more efficient in its presence. Cleavage at Asp-275 by CASP1 (mature and uncleaved precursor forms), CASP4, CASP5 or CASP8 relieves autoinhibition and is sufficient to initiate pyroptosis. Cleavage by CASP1 and CASP4 is not strictly dependent on the consensus cleavage site on GSDMD but depends on an exosite interface on CASP1 that recognizes and binds the Gasdermin-D, C-terminal (GSDMD-CT) part. Cleavage by CASP8 takes place following inactivation of MAP3K7/TAK1 by Yersinia toxin YopJ. Cleavage at Asp-87 by CASP3 or CASP7 inactivates the ability to mediate pyroptosis, but generates the Gasdermin-D, p13 chain, which translocates to the nucleus and acts as a transcription regulator. Cleavage by papain allergen generates the Gasdermin-D, p40 chain. In terms of processing, palmitoylated at Cys-191 by ZDHHC5 and ZDHHC9 in response to microbial infection and danger signals. Palmitoylation takes place before cleavage by caspases (CASP1, CASP4, CASP5 or CASP8) and is required for membrane translocation and pore formation. Depalmitoylated by LYPLA2. Post-translationally, succination of Cys-191 by the Krebs cycle intermediate fumarate, which leads to S-(2-succinyl)cysteine residues, inhibits processing by caspases, and ability to initiate pyroptosis. Succination modification is catalyzed by a non-enzymatic reaction caused by an accumulation of fumarate. Glycosylated: O-GlcNAcylation by OGT leads to reduced cleavage by CASP4 and decreased LPS-induced endothelial cell pyroptosis. In terms of processing, (Microbial infection) Cleaved and inactivated by Protease 3C from Human enterovirus 71 (EV71), preventing GSDMD-mediated pyroptosis. Post-translationally, (Microbial infection) Cleaved and inactivated by the 3C-like proteinase nsp5 from human coronavirus SARS-CoV-2, preventing GSDMD-mediated pyroptosis. (Microbial infection) Ubiquitinated by S.flexneri IpaH7.8, leading to its degradation by the proteasome. As to expression, expressed in the suprabasal cells of esophagus, as well as in the isthmus/neck, pit, and gland of the stomach, suggesting preferential expression in differentiating cells.

It is found in the cytoplasm. It localises to the cytosol. Its subcellular location is the inflammasome. The protein resides in the cell membrane. The protein localises to the secreted. It is found in the mitochondrion membrane. It localises to the nucleus. Its activity is regulated as follows. The full-length protein before cleavage is inactive: intramolecular interactions between N- and C-terminal domains mediate autoinhibition in the absence of activation signal. The intrinsic pyroptosis-inducing activity is carried by the released N-terminal moiety (Gasdermin-D, N-terminal) following cleavage by caspases CASP1, CASP4, CASP5 or CASP8. Cleavage at Asp-87 by CASP3 or CASP7 inactivates the ability to mediate pyroptosis. Homooligomerization and pore formation is specifically inhibited by VHH(GSDMD-1) and, to a lesser extent, VHH(GSDMD-2) nanobodies, protecting against excessive pyroptosis. Inhibited by small molecule NU6300, which covalently reacts with Cys-191, thereby preventing palmitoylation and pyroptosis. Functionally, precursor of a pore-forming protein that plays a key role in host defense against pathogen infection and danger signals. This form constitutes the precursor of the pore-forming protein: upon cleavage, the released N-terminal moiety (Gasdermin-D, N-terminal) binds to membranes and forms pores, triggering pyroptosis. In terms of biological role, promotes pyroptosis in response to microbial infection and danger signals. Produced by the cleavage of gasdermin-D by inflammatory caspases CASP1, CASP4 or CASP5 in response to canonical, as well as non-canonical (such as cytosolic LPS) inflammasome activators. After cleavage, moves to the plasma membrane where it strongly binds to inner leaflet lipids, including monophosphorylated phosphatidylinositols, such as phosphatidylinositol 4-phosphate, bisphosphorylated phosphatidylinositols, such as phosphatidylinositol (4,5)-bisphosphate, as well as phosphatidylinositol (3,4,5)-bisphosphate, and more weakly to phosphatidic acid and phosphatidylserine. Homooligomerizes within the membrane and forms pores of 10-15 nanometers (nm) of inner diameter, allowing the release of mature interleukin-1 (IL1B and IL18) and triggering pyroptosis. Gasdermin pores also allow the release of mature caspase-7 (CASP7). In some, but not all, cells types, pyroptosis is followed by pyroptotic cell death, which is caused by downstream activation of ninjurin-1 (NINJ1), which mediates membrane rupture (cytolysis). Also forms pores in the mitochondrial membrane, resulting in release of mitochondrial DNA (mtDNA) into the cytosol. Gasdermin-D, N-terminal released from pyroptotic cells into the extracellular milieu rapidly binds to and kills both Gram-negative and Gram-positive bacteria, without harming neighboring mammalian cells, as it does not disrupt the plasma membrane from the outside due to lipid-binding specificity. Under cell culture conditions, also active against intracellular bacteria, such as Listeria monocytogenes. Also active in response to MAP3K7/TAK1 inactivation by Yersinia toxin YopJ, which triggers cleavage by CASP8 and subsequent activation. Required for mucosal tissue defense against enteric pathogens. Activation of the non-canonical inflammasome in brain endothelial cells can lead to excessive pyroptosis, leading to blood-brain barrier breakdown. Strongly binds to bacterial and mitochondrial lipids, including cardiolipin. Does not bind to unphosphorylated phosphatidylinositol, phosphatidylethanolamine nor phosphatidylcholine. Transcription coactivator produced by the cleavage by CASP3 or CASP7 in the upper small intestine in response to dietary antigens. Required to maintain food tolerance in small intestine: translocates to the nucleus and acts as a coactivator for STAT1 to induce the transcription of CIITA and MHC class II molecules, which in turn induce type 1 regulatory T (Tr1) cells in upper small intestine. Its function is as follows. Produced by the cleavage by papain allergen. After cleavage, moves to the plasma membrane and homooligomerizes within the membrane and forms pores of 10-15 nanometers (nm) of inner diameter, allowing the specific release of mature interleukin-33 (IL33), promoting type 2 inflammatory immune response. The sequence is that of Gasdermin-D from Homo sapiens (Human).